Consider the following 297-residue polypeptide: uncharacterized protein (297 aa).

4 consecutive transmembrane segments (helical) span residues 3-23, 38-58, 103-123, and 128-148; these read DYIY…LYML, VIHI…MPAL, IEGI…TALL, and YVFL…LLAM.

The protein localises to the cell membrane. This is an uncharacterized protein from Bacillus subtilis (strain 168).